The sequence spans 127 residues: Odontogenesis-associated phosphoprotein (127 aa).

The N-terminal stretch at 1-23 (MAPGFHFSWLLVSWLVVTTVKGQ) is a signal peptide.

In terms of tissue distribution, expressed in enamel organs and not expressed in the heart, kidney, or spleen.

It localises to the secreted. In terms of biological role, may promote nucleation of hydroxyapatite. This Rattus norvegicus (Rat) protein is Odontogenesis-associated phosphoprotein.